The following is a 188-amino-acid chain: Elongation factor P-like protein (188 aa).

The protein belongs to the elongation factor P family.

The protein is Elongation factor P-like protein of Xylella fastidiosa (strain 9a5c).